The primary structure comprises 597 residues: Elongation factor 4 (597 aa).

The tr-type G domain occupies 2-184 (KNIRNFSIIA…EIVHKIPAPE (183 aa)). Residues 14-19 (DHGKST) and 131-134 (NKID) contribute to the GTP site.

Belongs to the TRAFAC class translation factor GTPase superfamily. Classic translation factor GTPase family. LepA subfamily.

It localises to the cell inner membrane. The enzyme catalyses GTP + H2O = GDP + phosphate + H(+). In terms of biological role, required for accurate and efficient protein synthesis under certain stress conditions. May act as a fidelity factor of the translation reaction, by catalyzing a one-codon backward translocation of tRNAs on improperly translocated ribosomes. Back-translocation proceeds from a post-translocation (POST) complex to a pre-translocation (PRE) complex, thus giving elongation factor G a second chance to translocate the tRNAs correctly. Binds to ribosomes in a GTP-dependent manner. This is Elongation factor 4 from Actinobacillus succinogenes (strain ATCC 55618 / DSM 22257 / CCUG 43843 / 130Z).